The sequence spans 2344 residues: Pecanex-like protein 1 (2344 aa).

The next 2 membrane-spanning stretches (helical) occupy residues 33–53 and 57–77; these read ALHL…YMAL and MIIV…LKMV. 4 disordered regions span residues 101-163, 271-290, 306-692, and 749-837; these read QRAK…GSSR, SHSY…SSSA, QQQR…TRAR, and VTRS…VQSR. Over residues 143 to 163 the composition is skewed to polar residues; sequence SSRNSYAGLDPSNQIGSGSSR. Residues 272-282 are compositionally biased toward basic residues; it reads HSYRKEHRPRG. The segment covering 328–343 has biased composition (polar residues); that stretch reads RESSAGKSCPPAQSQP. Positions 372–390 are enriched in low complexity; the sequence is SLRSLSTRSSGSTESYCSG. Polar residues predominate over residues 396–406; the sequence is NSTLSSYKSEQ. Basic and acidic residues-rich tracts occupy residues 416-458, 508-522, and 531-547; these read LSEH…DKTA, RPPE…EQSE, and RVCK…DVRP. Basic residues predominate over residues 557–572; that stretch reads TSAHKPGRRRTGKKRA. Residues 616–638 show a composition bias toward low complexity; sequence SIHSAHQFSSDSSSSATSHSCQS. The segment covering 749–758 has biased composition (polar residues); that stretch reads VTRSRNSLPS. 2 stretches are compositionally biased toward low complexity: residues 770–781 and 817–835; these read AATGAAQASEEA and LSLQ…VKVQ. The next 3 helical transmembrane spans lie at 1010 to 1030, 1035 to 1055, and 1069 to 1089; these read ILAV…LIQG, IWVF…LKSV, and IIAY…WLLD. Asn1094 carries N-linked (GlcNAc...) asparagine glycosylation. A helical transmembrane segment spans residues 1119–1139; sequence LVIVFTLCFPIVFFIGLLPQV. N-linked (GlcNAc...) asparagine glycosylation is present at Asn1158. The next 4 membrane-spanning stretches (helical) occupy residues 1163 to 1183, 1196 to 1216, 1269 to 1289, and 1297 to 1317; these read LLAA…LYGL, HVPV…YHLS, LVVC…TVFT, and YVLY…LPQV. 4 N-linked (GlcNAc...) asparagine glycosylation sites follow: Asn1582, Asn1723, Asn1985, and Asn2075. The interval 2051-2123 is disordered; sequence EDSDTGGGTS…SSLVRQSPAR (73 aa). Polar residues-rich tracts occupy residues 2061-2081 and 2095-2118; these read CPGN…QGST and PTTS…SLVR. N-linked (GlcNAc...) asparagine glycans are attached at residues Asn2231, Asn2237, and Asn2263.

It belongs to the pecanex family.

The protein localises to the membrane. This chain is Pecanex-like protein 1, found in Mus musculus (Mouse).